We begin with the raw amino-acid sequence, 347 residues long: MPSQQRSSSGSTAKAGDADGDGDAAAVSFLGDKSAKVFIAGHRGMVGSAVHRKLDALGFTNVVVRTRAELDLACQAAVEAFFAAELPRYVILAAAKVGGVHASSAAPAEYLTENLRITVNVVDAARRCGSVRKLLVLASSTIYPADAPQPTPESALLTGPPAEGSEWYAIPKIAGIKMCQAVRAEYGLDAIAAAPNNLYGPRHPFPPEHSHVIPALIRRFHRAKLEGAGEVAVWGSGAAAREFTHVDDLAEAVVVLMERYSGEEHVNVGSGEEVTVRELAEAVRGVVGYEGVVAWDAARPEGVARRVVDSGRMRKLGWEPRVALRDGIQDLYRFYLRHECGGQAHHA.

The disordered stretch occupies residues 1-20 (MPSQQRSSSGSTAKAGDADG). 41 to 47 (GHRGMVG) lines the NADP(+) pocket. Catalysis depends on Y168, which acts as the Proton donor/acceptor. NADP(+)-binding positions include K172, 195 to 198 (PNNL), and H211. Substrate is bound by residues R219, W234, R241, and E301.

It belongs to the NAD(P)-dependent epimerase/dehydratase family. Fucose synthase subfamily. As to quaternary structure, homodimer.

It carries out the reaction GDP-beta-L-fucose + NADP(+) = GDP-4-dehydro-alpha-D-rhamnose + NADPH + H(+). The protein operates within nucleotide-sugar biosynthesis; GDP-L-fucose biosynthesis via de novo pathway; GDP-L-fucose from GDP-alpha-D-mannose: step 2/2. In terms of biological role, catalyzes the two-step NADP-dependent conversion of GDP-4-dehydro-6-deoxy-D-mannose to GDP-fucose, involving an epimerase and a reductase reaction. This Oryza sativa subsp. japonica (Rice) protein is Putative GDP-L-fucose synthase 2.